The following is a 165-amino-acid chain: NADPH-dependent 7-cyano-7-deazaguanine reductase (165 aa).

Residues 1–24 (MTTRSTDQTEHLRALGQKTPYPAA) are disordered. The active-site Thioimide intermediate is the cysteine 56. The Proton donor role is filled by aspartate 63. Residues 78–80 (VES) and 97–98 (ME) contribute to the substrate site.

This sequence belongs to the GTP cyclohydrolase I family. QueF type 1 subfamily.

Its subcellular location is the cytoplasm. It catalyses the reaction 7-aminomethyl-7-carbaguanine + 2 NADP(+) = 7-cyano-7-deazaguanine + 2 NADPH + 3 H(+). Its pathway is tRNA modification; tRNA-queuosine biosynthesis. Functionally, catalyzes the NADPH-dependent reduction of 7-cyano-7-deazaguanine (preQ0) to 7-aminomethyl-7-deazaguanine (preQ1). This Nitratidesulfovibrio vulgaris (strain ATCC 29579 / DSM 644 / CCUG 34227 / NCIMB 8303 / VKM B-1760 / Hildenborough) (Desulfovibrio vulgaris) protein is NADPH-dependent 7-cyano-7-deazaguanine reductase.